An 88-amino-acid chain; its full sequence is Large ribosomal subunit protein bL27 (88 aa).

The disordered stretch occupies residues 1 to 24; sequence MATKKSGGSSGNGRDSRGRRLGVK.

Belongs to the bacterial ribosomal protein bL27 family.

In Ehrlichia chaffeensis (strain ATCC CRL-10679 / Arkansas), this protein is Large ribosomal subunit protein bL27.